We begin with the raw amino-acid sequence, 127 residues long: Large ribosomal subunit protein bL19 (127 aa).

The protein belongs to the bacterial ribosomal protein bL19 family.

Its function is as follows. This protein is located at the 30S-50S ribosomal subunit interface and may play a role in the structure and function of the aminoacyl-tRNA binding site. The chain is Large ribosomal subunit protein bL19 from Cupriavidus pinatubonensis (strain JMP 134 / LMG 1197) (Cupriavidus necator (strain JMP 134)).